A 359-amino-acid polypeptide reads, in one-letter code: Membrane-bound lytic murein transglycosylase C (359 aa).

The signal sequence occupies residues 1 to 16 (MKKYLALALIAPLLIS). The N-palmitoyl cysteine moiety is linked to residue cysteine 17. Residue cysteine 17 is the site of S-diacylglycerol cysteine attachment.

This sequence belongs to the transglycosylase Slt family.

It localises to the cell outer membrane. The enzyme catalyses Exolytic cleavage of the (1-&gt;4)-beta-glycosidic linkage between N-acetylmuramic acid (MurNAc) and N-acetylglucosamine (GlcNAc) residues in peptidoglycan, from either the reducing or the non-reducing ends of the peptidoglycan chains, with concomitant formation of a 1,6-anhydrobond in the MurNAc residue.. Its function is as follows. Murein-degrading enzyme. May play a role in recycling of muropeptides during cell elongation and/or cell division. In Escherichia coli (strain SE11), this protein is Membrane-bound lytic murein transglycosylase C.